We begin with the raw amino-acid sequence, 205 residues long: Inactive ribonuclease-like protein 9 (205 aa).

A signal peptide spans 1–26 (MMRTLITTHPLPLLLLPQQLLQLVQF). Disulfide bonds link Cys116-Cys168 and Cys123-Cys130. N-linked (GlcNAc...) asparagine glycosylation is found at Asn131 and Asn143.

The protein belongs to the pancreatic ribonuclease family. In terms of tissue distribution, at the mRNA level, widely expressed. At protein level, restricted to epididymis. Expressed in spermatozoa (sperm head and neck), with higher levels on ejaculated and epididymal sperm than on testicular sperm (at protein level). Expressed in the epithelial cells of the epididymal tubule (at protein level). Not detected in muscle.

The protein localises to the secreted. Functionally, does not exhibit any ribonuclease activity. The protein is Inactive ribonuclease-like protein 9 (RNASE9) of Homo sapiens (Human).